Consider the following 564-residue polypeptide: Nucleolus and neural progenitor protein (564 aa).

The segment at 431–495 (GSRTSTSEHP…KRRCSGTVQR (65 aa)) is disordered. Positions 442–459 (RQRRSKYKVLSRQRKPQR) are enriched in basic residues. Residues 442–460 (RQRRSKYKVLSRQRKPQRK) are nuclear localization signal. The segment covering 460-473 (KLQSTLLKETQQVP) has biased composition (polar residues).

Belongs to the nepro family.

The protein resides in the nucleus. It localises to the nucleolus. In terms of biological role, may play a role in cortex development as part of the Notch signaling pathway. Downstream of Notch may repress the expression of proneural genes and inhibit neuronal differentiation thereby maintaining neural progenitors. May also play a role in preimplentation embryo development. The sequence is that of Nucleolus and neural progenitor protein from Mus musculus (Mouse).